Consider the following 307-residue polypeptide: Serine/threonine-protein phosphatase PP2A-3 catalytic subunit (307 aa).

Mn(2+)-binding residues include Asp55, His57, Asp83, and Asn115. His116 functions as the Proton donor in the catalytic mechanism. His165 and His239 together coordinate Mn(2+).

This sequence belongs to the PPP phosphatase family. PP-2A subfamily. The cofactor is Mn(2+).

Its subcellular location is the cytoplasm. The catalysed reaction is O-phospho-L-seryl-[protein] + H2O = L-seryl-[protein] + phosphate. The enzyme catalyses O-phospho-L-threonyl-[protein] + H2O = L-threonyl-[protein] + phosphate. The sequence is that of Serine/threonine-protein phosphatase PP2A-3 catalytic subunit (PP2A3) from Oryza sativa subsp. indica (Rice).